The primary structure comprises 59 residues: Large ribosomal subunit protein uL30 (59 aa).

It belongs to the universal ribosomal protein uL30 family. In terms of assembly, part of the 50S ribosomal subunit.

This is Large ribosomal subunit protein uL30 from Photorhabdus laumondii subsp. laumondii (strain DSM 15139 / CIP 105565 / TT01) (Photorhabdus luminescens subsp. laumondii).